Here is a 1167-residue protein sequence, read N- to C-terminus: Integrin alpha-10 (1167 aa).

The N-terminal stretch at 1-22 (MELPFVTHLFLPLVFLTGLCSP) is a signal peptide. Residues 23–1122 (FNLDEHHPRL…VVQTRPILIS (1100 aa)) lie on the Extracellular side of the membrane. FG-GAP repeat units follow at residues 24-85 (NLDE…HNAP) and 95-154 (QLGN…PQGS). Cys76 and Cys86 are disulfide-bonded. N-linked (GlcNAc...) asparagine glycosylation is found at Asn98, Asn234, Asn336, and Asn364. Residues 167–350 (DVVIVLDGSN…AALTDIVDAL (184 aa)) enclose the VWFA domain. FG-GAP repeat units follow at residues 361 to 412 (HAEN…LFPP), 417 to 470 (EDEF…KDGA), 472 to 534 (RVAQ…SLLT), 535 to 593 (LQGT…GVRP), and 597 to 657 (QRIA…VTPQ). Residues Asp494, Asp496, Asp498, Asp502, Asp558, Asn560, Asp562, Asp566, Asp620, Asp622, Asp624, and Asp628 each contribute to the Ca(2+) site. Disulfide bonds link Cys666–Cys675 and Cys681–Cys736. Residues Asn733 and Asn763 are each glycosylated (N-linked (GlcNAc...) asparagine). Cysteines 789 and 795 form a disulfide. Asn839, Asn921, Asn1011, Asn1018, and Asn1039 each carry an N-linked (GlcNAc...) asparagine glycan. The helical transmembrane segment at 1123-1145 (LWILIGSVLGGLLLLALLVFCLW) threads the bilayer. At 1146–1167 (KLGFFAHKKIPEEEKREEKLEQ) the chain is on the cytoplasmic side.

This sequence belongs to the integrin alpha chain family. Heterodimer of an alpha and a beta subunit. Alpha-10 associates with beta-1. In terms of tissue distribution, widely expressed with highest expression in muscle and heart. Found in articular cartilage.

The protein resides in the membrane. In terms of biological role, integrin alpha-10/beta-1 is a receptor for collagen. The protein is Integrin alpha-10 (ITGA10) of Homo sapiens (Human).